The following is a 149-amino-acid chain: Nucleoside diphosphate kinase (149 aa).

ATP is bound by residues K9, F57, R85, T91, R102, and N112. Residue H115 is the Pros-phosphohistidine intermediate of the active site.

It belongs to the NDK family. In terms of assembly, homotetramer. Mg(2+) serves as cofactor.

The protein localises to the cytoplasm. It carries out the reaction a 2'-deoxyribonucleoside 5'-diphosphate + ATP = a 2'-deoxyribonucleoside 5'-triphosphate + ADP. The catalysed reaction is a ribonucleoside 5'-diphosphate + ATP = a ribonucleoside 5'-triphosphate + ADP. Its function is as follows. Major role in the synthesis of nucleoside triphosphates other than ATP. The ATP gamma phosphate is transferred to the NDP beta phosphate via a ping-pong mechanism, using a phosphorylated active-site intermediate. This is Nucleoside diphosphate kinase from Trichodesmium erythraeum (strain IMS101).